Reading from the N-terminus, the 396-residue chain is NADH-quinone oxidoreductase subunit D (396 aa).

The protein belongs to the complex I 49 kDa subunit family. NDH-1 is composed of 14 different subunits. Subunits NuoB, C, D, E, F, and G constitute the peripheral sector of the complex.

The protein localises to the cell inner membrane. The catalysed reaction is a quinone + NADH + 5 H(+)(in) = a quinol + NAD(+) + 4 H(+)(out). Functionally, NDH-1 shuttles electrons from NADH, via FMN and iron-sulfur (Fe-S) centers, to quinones in the respiratory chain. The immediate electron acceptor for the enzyme in this species is believed to be ubiquinone. Couples the redox reaction to proton translocation (for every two electrons transferred, four hydrogen ions are translocated across the cytoplasmic membrane), and thus conserves the redox energy in a proton gradient. The chain is NADH-quinone oxidoreductase subunit D from Methylobacterium radiotolerans (strain ATCC 27329 / DSM 1819 / JCM 2831 / NBRC 15690 / NCIMB 10815 / 0-1).